The chain runs to 269 residues: Tryptophan synthase alpha chain (269 aa).

Active-site proton acceptor residues include Glu-50 and Asp-61.

The protein belongs to the TrpA family. Tetramer of two alpha and two beta chains.

It catalyses the reaction (1S,2R)-1-C-(indol-3-yl)glycerol 3-phosphate + L-serine = D-glyceraldehyde 3-phosphate + L-tryptophan + H2O. It functions in the pathway amino-acid biosynthesis; L-tryptophan biosynthesis; L-tryptophan from chorismate: step 5/5. Its function is as follows. The alpha subunit is responsible for the aldol cleavage of indoleglycerol phosphate to indole and glyceraldehyde 3-phosphate. This Francisella tularensis subsp. tularensis (strain FSC 198) protein is Tryptophan synthase alpha chain.